Reading from the N-terminus, the 331-residue chain is Ketol-acid reductoisomerase (NADP(+)) (331 aa).

Positions 2–182 (AKMYYDQDAD…GGTKAGAIET (181 aa)) constitute a KARI N-terminal Rossmann domain. Residues 25–28 (FGSQ), S51, S53, and 83–86 (DEKQ) contribute to the NADP(+) site. H108 is an active-site residue. Position 134 (G134) interacts with NADP(+). Residues 183-328 (TFKEETETDL…KSLREMMPWL (146 aa)) enclose the KARI C-terminal knotted domain. Mg(2+) is bound by residues D191, E195, E227, and E231. Residue S252 participates in substrate binding.

It belongs to the ketol-acid reductoisomerase family. Mg(2+) serves as cofactor.

The catalysed reaction is (2R)-2,3-dihydroxy-3-methylbutanoate + NADP(+) = (2S)-2-acetolactate + NADPH + H(+). It catalyses the reaction (2R,3R)-2,3-dihydroxy-3-methylpentanoate + NADP(+) = (S)-2-ethyl-2-hydroxy-3-oxobutanoate + NADPH + H(+). It participates in amino-acid biosynthesis; L-isoleucine biosynthesis; L-isoleucine from 2-oxobutanoate: step 2/4. It functions in the pathway amino-acid biosynthesis; L-valine biosynthesis; L-valine from pyruvate: step 2/4. Its function is as follows. Involved in the biosynthesis of branched-chain amino acids (BCAA). Catalyzes an alkyl-migration followed by a ketol-acid reduction of (S)-2-acetolactate (S2AL) to yield (R)-2,3-dihydroxy-isovalerate. In the isomerase reaction, S2AL is rearranged via a Mg-dependent methyl migration to produce 3-hydroxy-3-methyl-2-ketobutyrate (HMKB). In the reductase reaction, this 2-ketoacid undergoes a metal-dependent reduction by NADPH to yield (R)-2,3-dihydroxy-isovalerate. The polypeptide is Ketol-acid reductoisomerase (NADP(+)) (Caldanaerobacter subterraneus subsp. tengcongensis (strain DSM 15242 / JCM 11007 / NBRC 100824 / MB4) (Thermoanaerobacter tengcongensis)).